The primary structure comprises 286 residues: Deaminated glutathione amidase (286 aa).

Positions 4–252 (ANVALLQLCS…VSALKVKIET (249 aa)) constitute a CN hydrolase domain. Glu-42 (proton acceptor) is an active-site residue. Lys-115 is an active-site residue. The active-site Nucleophile is the Cys-157.

Belongs to the carbon-nitrogen hydrolase superfamily. NIT1/NIT2 family.

The enzyme catalyses N-(4-oxoglutaryl)-L-cysteinylglycine + H2O = L-cysteinylglycine + 2-oxoglutarate. Hydrolyzes deaminated glutathione (dGSH, 2-oxoglutaramate) to alpha-ketoglutarate (alpha-KG) and cysteinylglycine (specific activity 6.50 umol/min/mg), has less activity against alpha-ketoglutaramate (a-KGM, specific activity 0.20 umol/min/mg), very little activity on glutathione and none on L-glutamine. May function as a metabolite repair enzyme. In Yersinia enterocolitica, this protein is Deaminated glutathione amidase.